Reading from the N-terminus, the 234-residue chain is Probable chemoreceptor glutamine deamidase CheD 1 (234 aa).

A disordered region spans residues 183–234 (AREAAGPRGERAARARPRVELFGTPAPKAQATPRIELFGTRATQPATRKQEA). The span at 190 to 201 (RGERAARARPRV) shows a compositional bias: basic and acidic residues. The segment covering 223-234 (RATQPATRKQEA) has biased composition (polar residues).

Belongs to the CheD family.

It catalyses the reaction L-glutaminyl-[protein] + H2O = L-glutamyl-[protein] + NH4(+). Probably deamidates glutamine residues to glutamate on methyl-accepting chemotaxis receptors (MCPs), playing an important role in chemotaxis. In Burkholderia thailandensis (strain ATCC 700388 / DSM 13276 / CCUG 48851 / CIP 106301 / E264), this protein is Probable chemoreceptor glutamine deamidase CheD 1.